A 171-amino-acid chain; its full sequence is CASP-like protein 0U2 (171 aa).

The Cytoplasmic segment spans residues 1 to 22 (MPVFGLAALKLNWEALSTPKFR). The chain crosses the membrane as a helical span at residues 23–42 (VTFAQWVCSLLMWSLMASYS). Residues 43-48 (KHGEFK) lie on the Extracellular side of the membrane. The helical transmembrane segment at 49–69 (FVVVFGLVMWGLASTYLVYQL) threads the bilayer. Residues 70 to 77 (LNGPPLAP) lie on the Cytoplasmic side of the membrane. A helical transmembrane segment spans residues 78–98 (IVEFWANVAAGSLAFICLVLA). Over 99–121 (SATCNRAVGEPQTKVCSGELKPK) the chain is Extracellular. Residues 122–142 (ASAAFAFLLLCAYGGLAYLSW) traverse the membrane as a helical segment. The Cytoplasmic segment spans residues 143–171 (RTWRNPPTIASYALHDDPEFAQPLHSSHK).

It belongs to the Casparian strip membrane proteins (CASP) family. In terms of assembly, homodimer and heterodimers.

Its subcellular location is the cell membrane. This chain is CASP-like protein 0U2, found in Chlorokybus atmophyticus (Soil alga).